The sequence spans 339 residues: Serine/threonine-protein kinase SAPK2 (339 aa).

A Protein kinase domain is found at 4 to 260 (YEVIKDIGSG…IPEIKNHPWF (257 aa)). Residues 10–18 (IGSGNFGVA) and Lys33 each bind ATP. The active-site Proton acceptor is Asp123. The tract at residues 253–339 (EIKNHPWFLK…EDSGDFVCAL (87 aa)) is C-terminal.

The protein belongs to the protein kinase superfamily. Ser/Thr protein kinase family. In terms of assembly, interacts with BZIP46. Interacts with ABI5 and PP2C30. Interacts with PP2C51. Phosphorylated. As to expression, expressed in leaf blades, leaf sheaths and roots. Expressed in shoots and roots of young seedlings.

The protein resides in the cytoplasm. It is found in the nucleus. The enzyme catalyses L-seryl-[protein] + ATP = O-phospho-L-seryl-[protein] + ADP + H(+). It catalyses the reaction L-threonyl-[protein] + ATP = O-phospho-L-threonyl-[protein] + ADP + H(+). Its activity is regulated as follows. Activated by phosphorylation in response to hyperosmotic stress within 5 minutes. May play a role in signal transduction of hyperosmotic response. Can phosphorylate BZIP46 in vitro. Together with ABI5, PP2C30 and PYL5, is part of an abscisic acid (ABA) signaling unit that modulates seed germination and early seedling growth. This Oryza sativa subsp. japonica (Rice) protein is Serine/threonine-protein kinase SAPK2 (SAPK2).